The sequence spans 221 residues: Ribosomal RNA small subunit methyltransferase G 3 (221 aa).

Residues Gly85, Phe90, 136 to 137, and Arg150 contribute to the S-adenosyl-L-methionine site; that span reads IE.

This sequence belongs to the methyltransferase superfamily. RNA methyltransferase RsmG family.

The protein localises to the cytoplasm. It carries out the reaction guanosine(527) in 16S rRNA + S-adenosyl-L-methionine = N(7)-methylguanosine(527) in 16S rRNA + S-adenosyl-L-homocysteine. Its function is as follows. Specifically methylates the N7 position of guanine in position 527 of 16S rRNA. In Bdellovibrio bacteriovorus (strain ATCC 15356 / DSM 50701 / NCIMB 9529 / HD100), this protein is Ribosomal RNA small subunit methyltransferase G 3.